Reading from the N-terminus, the 136-residue chain is Small ribosomal subunit protein uS19 (136 aa).

The protein belongs to the universal ribosomal protein uS19 family.

Protein S19 forms a complex with S13 that binds strongly to the 16S ribosomal RNA. The protein is Small ribosomal subunit protein uS19 of Methanocorpusculum labreanum (strain ATCC 43576 / DSM 4855 / Z).